The sequence spans 493 residues: ATP synthase subunit beta, chloroplastic (493 aa).

170–177 (GGAGVGKT) lines the ATP pocket.

This sequence belongs to the ATPase alpha/beta chains family. As to quaternary structure, F-type ATPases have 2 components, CF(1) - the catalytic core - and CF(0) - the membrane proton channel. CF(1) has five subunits: alpha(3), beta(3), gamma(1), delta(1), epsilon(1). CF(0) has four main subunits: a(1), b(1), b'(1) and c(9-12).

It localises to the plastid. Its subcellular location is the chloroplast thylakoid membrane. It catalyses the reaction ATP + H2O + 4 H(+)(in) = ADP + phosphate + 5 H(+)(out). Functionally, produces ATP from ADP in the presence of a proton gradient across the membrane. The catalytic sites are hosted primarily by the beta subunits. This is ATP synthase subunit beta, chloroplastic from Lachenalia pusilla (Cape cowslips).